The primary structure comprises 422 residues: D-amino acid dehydrogenase (422 aa).

Position 3–17 (3–17) interacts with FAD; sequence VVVIGAGVVGTASAW.

The protein belongs to the DadA oxidoreductase family. FAD serves as cofactor.

The catalysed reaction is a D-alpha-amino acid + A + H2O = a 2-oxocarboxylate + AH2 + NH4(+). It participates in amino-acid degradation; D-alanine degradation; NH(3) and pyruvate from D-alanine: step 1/1. Its function is as follows. Oxidative deamination of D-amino acids. This Paramagnetospirillum magneticum (strain ATCC 700264 / AMB-1) (Magnetospirillum magneticum) protein is D-amino acid dehydrogenase.